Consider the following 532-residue polypeptide: Bifunctional purine biosynthesis protein PurH (532 aa).

Positions 1-149 (MTDPAPLTRA…KNHGAVTVLT (149 aa)) constitute an MGS-like domain.

It belongs to the PurH family.

It carries out the reaction (6R)-10-formyltetrahydrofolate + 5-amino-1-(5-phospho-beta-D-ribosyl)imidazole-4-carboxamide = 5-formamido-1-(5-phospho-D-ribosyl)imidazole-4-carboxamide + (6S)-5,6,7,8-tetrahydrofolate. The catalysed reaction is IMP + H2O = 5-formamido-1-(5-phospho-D-ribosyl)imidazole-4-carboxamide. The protein operates within purine metabolism; IMP biosynthesis via de novo pathway; 5-formamido-1-(5-phospho-D-ribosyl)imidazole-4-carboxamide from 5-amino-1-(5-phospho-D-ribosyl)imidazole-4-carboxamide (10-formyl THF route): step 1/1. It participates in purine metabolism; IMP biosynthesis via de novo pathway; IMP from 5-formamido-1-(5-phospho-D-ribosyl)imidazole-4-carboxamide: step 1/1. This is Bifunctional purine biosynthesis protein PurH from Jannaschia sp. (strain CCS1).